An 82-amino-acid polypeptide reads, in one-letter code: Small ribosomal subunit protein uS17 (82 aa).

Belongs to the universal ribosomal protein uS17 family. As to quaternary structure, part of the 30S ribosomal subunit.

Functionally, one of the primary rRNA binding proteins, it binds specifically to the 5'-end of 16S ribosomal RNA. The protein is Small ribosomal subunit protein uS17 of Rickettsia typhi (strain ATCC VR-144 / Wilmington).